Consider the following 198-residue polypeptide: FMN-dependent NADH:quinone oxidoreductase (198 aa).

FMN-binding positions include S9 and 95-98 (MYNF).

It belongs to the azoreductase type 1 family. In terms of assembly, homodimer. The cofactor is FMN.

It catalyses the reaction 2 a quinone + NADH + H(+) = 2 a 1,4-benzosemiquinone + NAD(+). The catalysed reaction is N,N-dimethyl-1,4-phenylenediamine + anthranilate + 2 NAD(+) = 2-(4-dimethylaminophenyl)diazenylbenzoate + 2 NADH + 2 H(+). Its function is as follows. Quinone reductase that provides resistance to thiol-specific stress caused by electrophilic quinones. Also exhibits azoreductase activity. Catalyzes the reductive cleavage of the azo bond in aromatic azo compounds to the corresponding amines. This chain is FMN-dependent NADH:quinone oxidoreductase, found in Alcanivorax borkumensis (strain ATCC 700651 / DSM 11573 / NCIMB 13689 / SK2).